Reading from the N-terminus, the 628-residue chain is tRNA(Thr) (cytosine(32)-N(3))-methyltransferase (628 aa).

The span at 1–18 (MGVADLIKKFESISKEEG) shows a compositional bias: basic and acidic residues. 3 disordered regions span residues 1 to 106 (MGVA…GENA), 124 to 269 (AEVL…VNDL), and 302 to 331 (NIAH…TEGS). The span at 22 to 31 (VDTNSSSKPL) shows a compositional bias: polar residues. A compositionally biased stretch (basic and acidic residues) spans 32-42 (KSNDETKELHQ). A compositionally biased stretch (acidic residues) spans 53 to 62 (DVNEEFENEP). Serine 93 carries the post-translational modification Phosphoserine. Positions 132–146 (EESDAIQEGVAEETE) are enriched in acidic residues. A Phosphothreonine modification is found at threonine 150. Over residues 173–186 (PAEEYSQSEEDADI) the composition is skewed to acidic residues. Residues 196 to 207 (NAENASQQANDG) are compositionally biased toward polar residues. Positions 215 to 230 (KNKKKKNKKKNKKKRN) are enriched in basic residues. Over residues 231–240 (GNVNTNANVD) the composition is skewed to polar residues. Residues serine 321 and serine 326 each carry the phosphoserine modification. A Phosphothreonine modification is found at threonine 347. The S-adenosyl-L-methionine site is built by tryptophan 399, tyrosine 403, glycine 441, aspartate 466, aspartate 492, leucine 493, and isoleucine 515.

Belongs to the methyltransferase superfamily. METL family. Interacts with SES1.

Its subcellular location is the cytoplasm. The protein localises to the cytoskeleton. The catalysed reaction is cytidine(32) in tRNA(Thr) + S-adenosyl-L-methionine = N(3)-methylcytidine(32) in tRNA(Thr) + S-adenosyl-L-homocysteine + H(+). The enzyme catalyses cytidine(32) in tRNA(Ser) + S-adenosyl-L-methionine = N(3)-methylcytidine(32) in tRNA(Ser) + S-adenosyl-L-homocysteine + H(+). S-adenosyl-L-methionine-dependent methyltransferase that mediates N(3)-methylcytidine modification of residue 32 of the tRNA anticodon loop of tRNA(Thr) and tRNA(Ser). N(3)-methylcytidine methylation of tRNA(Thr) requires the N6-threonylcarbamoylation of tRNA (t6A37) by the EKC/KEOPS complex as prerequisite. N(3)-methylcytidine methylation of tRNA(Ser) requires the formation of N(6)-dimethylallyladenosine(37) (i6A37) by MOD5 as prerequisite. Methylation of tRNA(Ser) is also stimulated by SES1. Binds F-actin and shows weak F-actin cross-linking activity. This is tRNA(Thr) (cytosine(32)-N(3))-methyltransferase (ABP140) from Saccharomyces cerevisiae (strain ATCC 204508 / S288c) (Baker's yeast).